We begin with the raw amino-acid sequence, 417 residues long: MTLPVLIIGAGLSGLTTARLLTNAHIPCIVFEASPPSRTQGYAISLRDWGFNALLRALGNLPLSSLTRAVAPDRHIGGWGWLDQSWRNNQTGEIIMMPPKESKEKPTILRANRNALRQWIADAGVGEDEEIDVRYGHRLVGVQLLREGGDGNVVTAEFANGATYTGSLLIAADGVHSTVRTLILPAVKPEILPVLVYHGDFKLSREEYECVIRPHAGESTIVAGVGDGFNTPLTVCDVTSTTVHMDWTYSRPSIGDNDPLYNPNITSEEAKVIPEALIEEINAKKLGEPWSLFLNGEAMRRHRVFNWLTRCVSMERSDVNSCTGKGVVFVGDSWHAMPIFGGEGGNHAIFDGIELAKMLEVAWGRSKEDVQAAIGKYYDKSWRRCNDAVRRSKQRFYQLHRPISEWIEIAEKQKMRA.

The N-terminal stretch at methionine 1–alanine 18 is a signal peptide. Residues glutamate 32, alanine 43, arginine 117, aspartate 332, and glycine 345 each contribute to the FAD site.

This sequence belongs to the paxM FAD-dependent monooxygenase family. FAD serves as cofactor.

The enzyme catalyses 3,6,8,9-tetrahydroxy-1-oxo-3-(2-oxopropyl)-1,2,3,4-tetrahydroanthracene-2-carboxyl-[ACP] + NADPH + O2 + H(+) = 2,3,6,8,9-pentahydroxy-1-oxo-3-(2-oxopropyl)-1,2,3,4-tetrahydroanthracene-2-carboxyl-[ACP] + NADP(+) + H2O. The protein operates within secondary metabolite biosynthesis. In terms of biological role, FAD-dependent monooxygenase; part of the gene cluster that mediates the biosynthesis of asperthecin, an anthraquinone pigment. Polyketide synthase (PKS) aptA catalyzes the formation of the aromatic polyketide from acetyl coenzyme A and seven malonyl coenzyme A molecules. Polyketide is subsequently hydrolyzed by the action of the hydrolase aptB into endocrocin-9-anthrone. Endocrocin-9-anthrone is then oxidized into endocrocin by the monooxygenase aptC. Endocrocin is likely to decarboxylate spontaneously to form emodin which explains why there is no decarboxylase in the asperthecin biosynthesis cluster. Finally, aptC or another endogenous oxygenase catalyzes additional oxidation steps to form asperthecin. In Emericella nidulans (strain FGSC A4 / ATCC 38163 / CBS 112.46 / NRRL 194 / M139) (Aspergillus nidulans), this protein is FAD-dependent monooxygenase aptC.